We begin with the raw amino-acid sequence, 237 residues long: Demethylmenaquinone methyltransferase (237 aa).

Residues threonine 58, aspartate 79, and 106 to 107 (NA) contribute to the S-adenosyl-L-methionine site.

The protein belongs to the class I-like SAM-binding methyltransferase superfamily. MenG/UbiE family.

The enzyme catalyses a 2-demethylmenaquinol + S-adenosyl-L-methionine = a menaquinol + S-adenosyl-L-homocysteine + H(+). It participates in quinol/quinone metabolism; menaquinone biosynthesis; menaquinol from 1,4-dihydroxy-2-naphthoate: step 2/2. In terms of biological role, methyltransferase required for the conversion of demethylmenaquinol (DMKH2) to menaquinol (MKH2). In Bacillus cytotoxicus (strain DSM 22905 / CIP 110041 / 391-98 / NVH 391-98), this protein is Demethylmenaquinone methyltransferase.